The sequence spans 441 residues: UBX domain-containing protein 6 (441 aa).

Residues 1 to 10 (MKKFFQEFKA) form a mediates interaction with LMAN1 region. Lys-2 carries the post-translational modification N-acetylalanine. Disordered stretches follow at residues 13–79 (KFKS…QDTI) and 87–106 (LQAE…NVVS). The segment covering 22–36 (KLKESVGEKAHKEKP) has biased composition (basic and acidic residues). Residues 51–63 (EAQMAAAAALARL) form a VCP/p97-interacting motif (VIM) region. Residues 52 to 61 (AQMAAAAALA) are compositionally biased toward low complexity. Ser-96 bears the Phosphoserine mark. The 70-residue stretch at 175 to 244 (VDTIAKYLDN…DPEEFYVLSE (70 aa)) folds into the PUB domain. Positions 332-408 (RKYNYTLLRV…GLVPSALLTF (77 aa)) constitute a UBX domain.

As to quaternary structure, interacts with VCP through the PUB domain (via C-terminus) and VIM motif (via N-terminus); the interaction is direct. Forms a ternary complex with CAV1 and VCP. Interacts with SYVN1. Interacts with HERPUD1. Interacts with VCPKMT. May interact with DERL1. Interacts with PLAA, VCP and YOD1; may form a complex involved in macroautophagy. Interacts with LMAN1. Enhanced expression in testis.

The protein localises to the cytoplasm. It localises to the cytosol. It is found in the membrane. The protein resides in the nucleus. Its subcellular location is the cytoskeleton. The protein localises to the microtubule organizing center. It localises to the centrosome. It is found in the early endosome membrane. The protein resides in the late endosome membrane. Its subcellular location is the lysosome membrane. May negatively regulate the ATPase activity of VCP, an ATP-driven segregase that associates with different cofactors to control a wide variety of cellular processes. As a cofactor of VCP, it may play a role in the transport of CAV1 to lysosomes for degradation. It may also play a role in endoplasmic reticulum-associated degradation (ERAD) of misfolded proteins. Together with VCP and other cofactors, it may play a role in macroautophagy, regulating for instance the clearance of damaged lysosomes. This chain is UBX domain-containing protein 6, found in Homo sapiens (Human).